The primary structure comprises 200 residues: Acyl-homoserine-lactone synthase (200 aa).

It belongs to the autoinducer synthase family.

The enzyme catalyses a fatty acyl-[ACP] + S-adenosyl-L-methionine = an N-acyl-L-homoserine lactone + S-methyl-5'-thioadenosine + holo-[ACP] + H(+). Its function is as follows. Required for the synthesis of BHL (N-butanoyl-L-homoserine lactone). The polypeptide is Acyl-homoserine-lactone synthase (swrI) (Serratia liquefaciens).